We begin with the raw amino-acid sequence, 283 residues long: Foldase protein PrsA 3 (283 aa).

An N-terminal signal peptide occupies residues 1–21 (MKKKKIFIGTIISCVMLALSA). The N-palmitoyl cysteine moiety is linked to residue Cys-22. Cys-22 carries the S-diacylglycerol cysteine lipid modification. The PpiC domain occupies 132–222 (KPEMKVSHIL…YGYHIIKVTD (91 aa)).

The protein belongs to the PrsA family.

The protein resides in the cell membrane. It carries out the reaction [protein]-peptidylproline (omega=180) = [protein]-peptidylproline (omega=0). Functionally, plays a major role in protein secretion by helping the post-translocational extracellular folding of several secreted proteins. The sequence is that of Foldase protein PrsA 3 (prsA3) from Bacillus cereus (strain ATCC 14579 / DSM 31 / CCUG 7414 / JCM 2152 / NBRC 15305 / NCIMB 9373 / NCTC 2599 / NRRL B-3711).